A 365-amino-acid polypeptide reads, in one-letter code: Heat-inducible transcription repressor HrcA (365 aa).

The protein belongs to the HrcA family.

Functionally, negative regulator of class I heat shock genes (grpE-dnaK-dnaJ and groELS operons). Prevents heat-shock induction of these operons. The chain is Heat-inducible transcription repressor HrcA from Nodularia spumigena.